We begin with the raw amino-acid sequence, 503 residues long: 12-dehydrotetracycline 5-monooxygenase/anhydrotetracycline 6-monooxygenase (503 aa).

Residues threonine 13, 32-33 (ER), leucine 44, glutamine 99, valine 123, threonine 160, aspartate 288, and 301-302 (LN) each bind FAD.

It belongs to the PheA/TfdB FAD monooxygenase family. Monomer. Requires FAD as cofactor.

It catalyses the reaction 5a,11a-dehydrotetracycline + NADPH + O2 + H(+) = 5a,11a-dehydrooxytetracycline + NADP(+) + H2O. The enzyme catalyses anhydrotetracycline + NADPH + O2 + H(+) = 5a,11a-dehydrotetracycline + NADP(+) + H2O. The protein operates within antibiotic biosynthesis; oxytetracycline biosynthesis. Functionally, involved in the biosynthesis of the antibiotics oxytetracycline and tetracycline. OxyS starts by catalyzing the stereospecific hydroxylation of anhydrotetracycline at C(6) position to yield 5a,11a-dehydrotetracycline (12-dehydrotetracycline). If the released product is captured by OxyR, it is reduced to tetracycline. However, if the released product is recaptured by OxyS, it performs an additional hydroxylation at C(5), producing 5a,11a-dehydrooxytetracycline, which, following the action of OxyR becomes oxytetracycline. This is 12-dehydrotetracycline 5-monooxygenase/anhydrotetracycline 6-monooxygenase from Streptomyces rimosus subsp. rimosus (strain ATCC 10970 / DSM 40260 / JCM 4667 / NRRL 2234).